Here is a 332-residue protein sequence, read N- to C-terminus: Glycerol-3-phosphate dehydrogenase [NAD(P)+] (332 aa).

Residues S11, W12, R32, R33, and K106 each contribute to the NADPH site. The sn-glycerol 3-phosphate site is built by K106 and G136. A140 contacts NADPH. Positions 191, 244, 254, 255, and 256 each coordinate sn-glycerol 3-phosphate. The Proton acceptor role is filled by K191. NADPH is bound at residue R255. The NADPH site is built by V280 and E282.

The protein belongs to the NAD-dependent glycerol-3-phosphate dehydrogenase family.

The protein resides in the cytoplasm. The enzyme catalyses sn-glycerol 3-phosphate + NAD(+) = dihydroxyacetone phosphate + NADH + H(+). The catalysed reaction is sn-glycerol 3-phosphate + NADP(+) = dihydroxyacetone phosphate + NADPH + H(+). It participates in membrane lipid metabolism; glycerophospholipid metabolism. Functionally, catalyzes the reduction of the glycolytic intermediate dihydroxyacetone phosphate (DHAP) to sn-glycerol 3-phosphate (G3P), the key precursor for phospholipid synthesis. The chain is Glycerol-3-phosphate dehydrogenase [NAD(P)+] from Corynebacterium jeikeium (strain K411).